The primary structure comprises 357 residues: Sulfate/thiosulfate import ATP-binding protein CysA (357 aa).

The region spanning 3–237 (ITIQNLNKHF…PENAFVTEFL (235 aa)) is the ABC transporter domain. 35 to 42 (GPSGCGKT) is an ATP binding site.

It belongs to the ABC transporter superfamily. Sulfate/tungstate importer (TC 3.A.1.6) family. The complex is composed of two ATP-binding proteins (CysA), two transmembrane proteins (CysT and CysW) and a solute-binding protein (CysP).

The protein resides in the cell inner membrane. The catalysed reaction is sulfate(out) + ATP + H2O = sulfate(in) + ADP + phosphate + H(+). The enzyme catalyses thiosulfate(out) + ATP + H2O = thiosulfate(in) + ADP + phosphate + H(+). Functionally, part of the ABC transporter complex CysAWTP involved in sulfate/thiosulfate import. Responsible for energy coupling to the transport system. This is Sulfate/thiosulfate import ATP-binding protein CysA from Neisseria meningitidis serogroup B (strain ATCC BAA-335 / MC58).